The sequence spans 302 residues: IALILVCWSVLSQAAQTDVEGRADKRRPIWIMGHMVNAIAQIDEFVNLGANSIETDVSFDDNANPEYTYHGVPCDCGRSCLKWENFNDFLKGLRSATTPGNAKYQAKLILVVFDLKTGSLYDNQANEAGKKLAKNLLKHYWNNGNNGGRAYIVLSIPDLNHYPLIKGFKDQLTHDGHPELMDKVGHDFSGNDAIGDVGNAYKKAGISGHVWQSDGITNCLLRGLDRVKQAIANRDSGNGFINKVYYWTVDKRATTRDALDAGVDGVMTNYPDVITDVLNESAYKNKFRVASYEDNPWETFKK.

An N-terminal signal peptide occupies residues 1–14 (IALILVCWSVLSQA). A propeptide spanning residues 15 to 22 (AQTDVEGR) is cleaved from the precursor. His-34 is a catalytic residue. Residues Glu-54 and Asp-56 each coordinate Mg(2+). His-70 acts as the Nucleophile in catalysis. 2 disulfide bridges follow: Cys-74–Cys-80 and Cys-76–Cys-219. Residue Asp-114 participates in Mg(2+) binding. N-linked (GlcNAc...) asparagine glycosylation occurs at Asn-279.

It belongs to the arthropod phospholipase D family. Class II subfamily. It depends on Mg(2+) as a cofactor. In terms of tissue distribution, expressed by the venom gland.

Its subcellular location is the secreted. The catalysed reaction is an N-(acyl)-sphingosylphosphocholine = an N-(acyl)-sphingosyl-1,3-cyclic phosphate + choline. It catalyses the reaction an N-(acyl)-sphingosylphosphoethanolamine = an N-(acyl)-sphingosyl-1,3-cyclic phosphate + ethanolamine. It carries out the reaction a 1-acyl-sn-glycero-3-phosphocholine = a 1-acyl-sn-glycero-2,3-cyclic phosphate + choline. The enzyme catalyses a 1-acyl-sn-glycero-3-phosphoethanolamine = a 1-acyl-sn-glycero-2,3-cyclic phosphate + ethanolamine. Functionally, dermonecrotic toxins cleave the phosphodiester linkage between the phosphate and headgroup of certain phospholipids (sphingolipid and lysolipid substrates), forming an alcohol (often choline) and a cyclic phosphate. This toxin acts on sphingomyelin (SM). It may also act on ceramide phosphoethanolamine (CPE), lysophosphatidylcholine (LPC) and lysophosphatidylethanolamine (LPE), but not on lysophosphatidylserine (LPS), and lysophosphatidylglycerol (LPG). It acts by transphosphatidylation, releasing exclusively cyclic phosphate products as second products. Induces dermonecrosis, hemolysis, increased vascular permeability, edema, inflammatory response, and platelet aggregation. The polypeptide is Dermonecrotic toxin LiSicTox-alphaIA2bii (Loxosceles intermedia (Brown spider)).